The chain runs to 196 residues: Probable thymidylate kinase (196 aa).

7–14 serves as a coordination point for ATP; sequence GIDGSGKS.

Belongs to the thymidylate kinase family.

It carries out the reaction dTMP + ATP = dTDP + ADP. The chain is Probable thymidylate kinase from Natronomonas pharaonis (strain ATCC 35678 / DSM 2160 / CIP 103997 / JCM 8858 / NBRC 14720 / NCIMB 2260 / Gabara) (Halobacterium pharaonis).